The sequence spans 374 residues: MLDLTLGVEEEFLLLDPGTLEPAAAADRFRAETDRGEVHRELAPAQIESATAVCRTLEELHHDLSGLRRALAADAAEQGYRLASVGVPPIGSAGPPPVTDSPRYRRMYETYGSIIEDQGVCGCHVHVGALDLETALVAGNHLRPWLPALLLLTTNSPFFRGGDTGYASWRTTLWSRWPAAGPPPVLTSARHYHYVVDCLLASGAVLDSGMLYWYARPSHRVPTLEVRVADAAATVDEAVLLAGLVRGLVGVALSDRPGPVRPVDDAVLRAACWCSAHHGLEGFSLDVGTGRLVPSWHLVDDLVEHVRPVLERYGDLDAVRALLAKLRENGSAARRQREVFRRHRDIGEVVEHVLVETVPDENAALPGRSISPSA.

This sequence belongs to the glutamate--cysteine ligase type 2 family. YbdK subfamily.

The catalysed reaction is L-cysteine + L-glutamate + ATP = gamma-L-glutamyl-L-cysteine + ADP + phosphate + H(+). Functionally, ATP-dependent carboxylate-amine ligase which exhibits weak glutamate--cysteine ligase activity. This chain is Putative glutamate--cysteine ligase 2-1, found in Saccharopolyspora erythraea (strain ATCC 11635 / DSM 40517 / JCM 4748 / NBRC 13426 / NCIMB 8594 / NRRL 2338).